The chain runs to 538 residues: uncharacterized protein (538 aa).

4 disordered regions span residues 20–71 (RLSA…GGAQ), 151–211 (LWAE…EHPK), 288–331 (MLQP…QQHK), and 458–482 (EFEKASKLTGPGEASSGVGHSLKNY). Residues 154-171 (ESEKSESKGTRRDFRSYD) show a composition bias toward basic and acidic residues.

This is an uncharacterized protein from Homo sapiens (Human).